The sequence spans 218 residues: Thiopurine S-methyltransferase (218 aa).

Trp10, Leu45, Glu66, and Arg123 together coordinate S-adenosyl-L-methionine.

This sequence belongs to the class I-like SAM-binding methyltransferase superfamily. TPMT family.

Its subcellular location is the cytoplasm. It catalyses the reaction S-adenosyl-L-methionine + a thiopurine = S-adenosyl-L-homocysteine + a thiopurine S-methylether.. The sequence is that of Thiopurine S-methyltransferase from Shewanella baltica (strain OS195).